The primary structure comprises 1393 residues: DNA-directed RNA polymerase subunit beta' (1393 aa).

The Zn(2+) site is built by Cys70, Cys72, Cys85, and Cys88. Residues Asp461, Asp463, and Asp465 each coordinate Mg(2+). Zn(2+)-binding residues include Cys815, Cys889, Cys896, and Cys899.

Belongs to the RNA polymerase beta' chain family. In terms of assembly, the RNAP catalytic core consists of 2 alpha, 1 beta, 1 beta' and 1 omega subunit. When a sigma factor is associated with the core the holoenzyme is formed, which can initiate transcription. Requires Mg(2+) as cofactor. Zn(2+) is required as a cofactor.

The catalysed reaction is RNA(n) + a ribonucleoside 5'-triphosphate = RNA(n+1) + diphosphate. In terms of biological role, DNA-dependent RNA polymerase catalyzes the transcription of DNA into RNA using the four ribonucleoside triphosphates as substrates. The sequence is that of DNA-directed RNA polymerase subunit beta' from Vesicomyosocius okutanii subsp. Calyptogena okutanii (strain HA).